We begin with the raw amino-acid sequence, 152 residues long: Transcriptional repressor NrdR (152 aa).

A compositionally biased stretch (polar residues) spans 1–10 (MKCPSCQHNG). Residues 1 to 21 (MKCPSCQHNGSRVLDSRPADE) are disordered. A zinc finger lies at 3–34 (CPSCQHNGSRVLDSRPADEGKSIRRRRECEAC). An ATP-cone domain is found at 49 to 139 (LIVVKKEGVR…VYRQFKDINV (91 aa)).

The protein belongs to the NrdR family. The cofactor is Zn(2+).

Its function is as follows. Negatively regulates transcription of bacterial ribonucleotide reductase nrd genes and operons by binding to NrdR-boxes. This Bacillus velezensis (strain DSM 23117 / BGSC 10A6 / LMG 26770 / FZB42) (Bacillus amyloliquefaciens subsp. plantarum) protein is Transcriptional repressor NrdR.